The primary structure comprises 372 residues: Enolase (372 aa).

Substrate is bound by residues histidine 95 and glutamate 104. Glutamate 147 acts as the Proton donor in catalysis. Positions 182, 232, and 257 each coordinate Mg(2+). Positions 232 and 257 each coordinate substrate. The Proton acceptor role is filled by lysine 282. Residues 309-312 (SHRS) and lysine 333 contribute to the substrate site.

Belongs to the enolase family. Homodimer. Mg(2+) is required as a cofactor.

It localises to the cytoplasm. It carries out the reaction (2R)-2-phosphoglycerate = phosphoenolpyruvate + H2O. The protein operates within carbohydrate degradation; glycolysis; pyruvate from D-glyceraldehyde 3-phosphate: step 4/5. In Chlamydomonas reinhardtii (Chlamydomonas smithii), this protein is Enolase (ENO).